We begin with the raw amino-acid sequence, 506 residues long: MSFSVEVLAGIAIELQRGIGHQDRFQRLITTLRQVLACDASALLRYESRQFIPLAIDGLAQDVLGRRFTLEGHPRLEAIARAGDVVRFPADSDLPDPYDGLIPGQESLKVHACVGLPLFAGQNLIGALTLDAMTPEQFEVFSDEELRLVAALAAGALSNALLIEQLESQNMLPGSSGVFEPIKETHMIGLSPAMTQLKKEIEIVAGSDLNVLIGGETGTGKELVAKAIHQGSPRAVNPLVYLNCAALPESVAESELFGHVKGAFTGAISNRSGKFEMADNGTLFLDEIGELSLALQAKLLRVLQYGDIQRVGDDRSLRVDVRVLAATNRDLREEVLAGRFRADLFHRLSVFPLFVPPLRERGDDVVLLAGYFCEQCRLRLGLSRVVLSPDARRHLLNYGWPGNVRELEHAIHRAVVLARATRAGDEVILEAQHFALSEDVLPAPPAESFLALPTCRNLRESTENFQREMIRQALAQNNHNWAASARALETDVANLHRLAKRLGLKD.

D57 carries the post-translational modification 4-aspartylphosphate. Positions 187 to 416 (MIGLSPAMTQ…LEHAIHRAVV (230 aa)) constitute a Sigma-54 factor interaction domain. Residues 215–222 (GETGTGKE) and 278–287 (ADNGTLFLDE) contribute to the ATP site. A DNA-binding region (H-T-H motif) is located at residues 481–500 (WAASARALETDVANLHRLAK).

Its pathway is nitrogen metabolism; nitric oxide reduction. In terms of biological role, required for the expression of anaerobic nitric oxide (NO) reductase, acts as a transcriptional activator for at least the norVW operon. Activation also requires sigma-54. This is Anaerobic nitric oxide reductase transcription regulator NorR from Salmonella agona (strain SL483).